The chain runs to 122 residues: Large ribosomal subunit protein uL14 (122 aa).

This sequence belongs to the universal ribosomal protein uL14 family. Part of the 50S ribosomal subunit. Forms a cluster with proteins L3 and L19. In the 70S ribosome, L14 and L19 interact and together make contacts with the 16S rRNA in bridges B5 and B8.

In terms of biological role, binds to 23S rRNA. Forms part of two intersubunit bridges in the 70S ribosome. The chain is Large ribosomal subunit protein uL14 from Synechococcus sp. (strain JA-2-3B'a(2-13)) (Cyanobacteria bacterium Yellowstone B-Prime).